Here is a 541-residue protein sequence, read N- to C-terminus: Beta-glucuronidase (541 aa).

Positions 1–20 (MHHHPITLLSLLLGAAQSIA) are cleaved as a signal peptide. N-linked (GlcNAc...) asparagine glycans are attached at residues N69, N115, and N157. E208 acts as the Proton donor in catalysis. N-linked (GlcNAc...) asparagine glycosylation is found at N217, N291, and N304. Residue E324 is the Nucleophile of the active site. N-linked (GlcNAc...) asparagine glycosylation is found at N380, N426, N441, N483, and N512.

This sequence belongs to the glycosyl hydrolase 79 family. In terms of processing, N-glycosylated.

Its subcellular location is the secreted. The catalysed reaction is a beta-D-glucuronoside + H2O = D-glucuronate + an alcohol. In terms of biological role, beta-glucuronidase that hydrolyzes beta-glucuronosyl and 4-O-methyl-beta-glucuronosyl residues of arabinogalactan-protein. Hydrolyzed heparan sulfate only very weakly. Has no activity on xylan from birchwood. Able to catalyze the transglycosylation of glucuronic acid (GlcA) residues from p-nitrophenyl-beta-glucuronic acid (PNP beta-GlcA) to various monosaccharide acceptors such as glucose, galactose and xylose. The chain is Beta-glucuronidase from Aspergillus niger (strain ATCC MYA-4892 / CBS 513.88 / FGSC A1513).